A 311-amino-acid polypeptide reads, in one-letter code: Apulose-4-phosphate transketolase subunit B (311 aa).

This sequence belongs to the transketolase family. As to quaternary structure, probable heterodimer composed of AptA and AptB. The cofactor is thiamine diphosphate.

The enzyme catalyses apulose 4-phosphate + D-glyceraldehyde 3-phosphate = D-xylulose 5-phosphate + dihydroxyacetone phosphate. The protein operates within carbohydrate metabolism. Involved in catabolism of D-apiose. Catalyzes the transfer of the glycolaldehyde group from apulose-4-phosphate to D-glyceraldehyde 3-phosphate, generating dihydroxyacetone phosphate and D-xylulose-5-phosphate. This is Apulose-4-phosphate transketolase subunit B from Actinobacillus succinogenes (strain ATCC 55618 / DSM 22257 / CCUG 43843 / 130Z).